We begin with the raw amino-acid sequence, 141 residues long: uncharacterized protein (141 aa).

The span at 1–17 (MNKSESENDSEYHKEYS) shows a compositional bias: basic and acidic residues. Positions 1 to 24 (MNKSESENDSEYHKEYSESSDPED) are disordered. The stretch at 52 to 115 (IQNLNNNVKE…QMLFEKMRDM (64 aa)) forms a coiled coil.

This is an uncharacterized protein from Acanthamoeba polyphaga (Amoeba).